Reading from the N-terminus, the 143-residue chain is Large ribosomal subunit protein uL11 (143 aa).

This sequence belongs to the universal ribosomal protein uL11 family. Part of the ribosomal stalk of the 50S ribosomal subunit. Interacts with L10 and the large rRNA to form the base of the stalk. L10 forms an elongated spine to which L12 dimers bind in a sequential fashion forming a multimeric L10(L12)X complex. One or more lysine residues are methylated.

In terms of biological role, forms part of the ribosomal stalk which helps the ribosome interact with GTP-bound translation factors. This chain is Large ribosomal subunit protein uL11, found in Clavibacter sepedonicus (Clavibacter michiganensis subsp. sepedonicus).